The following is a 98-amino-acid chain: Small ribosomal subunit protein bS6 (98 aa).

Belongs to the bacterial ribosomal protein bS6 family.

In terms of biological role, binds together with bS18 to 16S ribosomal RNA. The protein is Small ribosomal subunit protein bS6 of Staphylococcus carnosus (strain TM300).